The following is a 176-amino-acid chain: Nucleoside triphosphate/diphosphate phosphatase (176 aa).

Residue Arg-23 is the Proton donor of the active site. Mg(2+) contacts are provided by Asn-87, Asp-103, Asp-105, Asp-107, Asp-120, and Glu-123.

The protein belongs to the Ntdp family. Mg(2+) serves as cofactor.

The catalysed reaction is a ribonucleoside 5'-triphosphate + H2O = a ribonucleoside 5'-diphosphate + phosphate + H(+). The enzyme catalyses a ribonucleoside 5'-diphosphate + H2O = a ribonucleoside 5'-phosphate + phosphate + H(+). Has nucleoside phosphatase activity towards nucleoside triphosphates and nucleoside diphosphates. The polypeptide is Nucleoside triphosphate/diphosphate phosphatase (Bacillus licheniformis (strain ATCC 14580 / DSM 13 / JCM 2505 / CCUG 7422 / NBRC 12200 / NCIMB 9375 / NCTC 10341 / NRRL NRS-1264 / Gibson 46)).